Here is a 175-residue protein sequence, read N- to C-terminus: 2-oxo-4-hydroxy-4-carboxy-5-ureidoimidazoline decarboxylase (175 aa).

Catalysis depends on histidine 67, which acts as the Proton donor. Substrate contacts are provided by residues proline 68, 84 to 88, and 119 to 123; these read SQNEQ and FVICA. The Microbody targeting signal motif lies at 173 to 175; sequence TKL.

It belongs to the OHCU decarboxylase family.

The protein localises to the peroxisome. It carries out the reaction 5-hydroxy-2-oxo-4-ureido-2,5-dihydro-1H-imidazole-5-carboxylate + H(+) = (S)-allantoin + CO2. Its pathway is purine metabolism; urate degradation; (S)-allantoin from urate: step 3/3. Functionally, catalyzes the stereoselective decarboxylation of 2-oxo-4-hydroxy-4-carboxy-5-ureidoimidazoline (OHCU) to (S)-allantoin. This Xenopus laevis (African clawed frog) protein is 2-oxo-4-hydroxy-4-carboxy-5-ureidoimidazoline decarboxylase (urad).